The following is a 571-amino-acid chain: Proline--tRNA ligase (571 aa).

Belongs to the class-II aminoacyl-tRNA synthetase family. ProS type 1 subfamily. In terms of assembly, homodimer.

It is found in the cytoplasm. It carries out the reaction tRNA(Pro) + L-proline + ATP = L-prolyl-tRNA(Pro) + AMP + diphosphate. Catalyzes the attachment of proline to tRNA(Pro) in a two-step reaction: proline is first activated by ATP to form Pro-AMP and then transferred to the acceptor end of tRNA(Pro). As ProRS can inadvertently accommodate and process non-cognate amino acids such as alanine and cysteine, to avoid such errors it has two additional distinct editing activities against alanine. One activity is designated as 'pretransfer' editing and involves the tRNA(Pro)-independent hydrolysis of activated Ala-AMP. The other activity is designated 'posttransfer' editing and involves deacylation of mischarged Ala-tRNA(Pro). The misacylated Cys-tRNA(Pro) is not edited by ProRS. The polypeptide is Proline--tRNA ligase (Histophilus somni (strain 129Pt) (Haemophilus somnus)).